Reading from the N-terminus, the 527-residue chain is Importin subunit alpha (527 aa).

In terms of domain architecture, IBB spans 1 to 58 (MSLRPNSRTEARRSRYKVAVDAEEGRRRREDNMVEIRKNKREENLLKKRREGLLQAQQ). 8 ARM repeats span residues 109 to 151 (IEEV…TSEN), 152 to 196 (TKVV…YRDL), 197 to 234 (VLGHGALVALLAQFNEQAKLSMLRNATWTLSNFCRGKP), 235 to 279 (QPLF…DKIQ), 280 to 319 (AVIEAGVCSRLVELLLHSSPSVLIPALRTVGNIVTGDDIQ), 320 to 362 (TQVM…NRNQ), 363 to 403 (IQIV…GGNH), and 404 to 445 (DQIK…KIGE).

Belongs to the importin alpha family. In terms of assembly, forms a complex with importin subunit beta-1.

The protein localises to the cytoplasm. Functionally, binds specifically and directly to substrates containing either a simple or bipartite NLS motif. Promotes docking of import substrates to the nuclear envelope. Seems to act as a cytosolic receptor for both simple and bipartite NLS motifs. The protein is Importin subunit alpha of Solanum lycopersicum (Tomato).